A 613-amino-acid polypeptide reads, in one-letter code: Pesticidal crystal-like protein Cry16Aa (613 aa).

It belongs to the delta endotoxin family.

Its subcellular location is the secreted. Functionally, toxin active on mosquito larvae of the species Aedes aegypti, Culex pipiens and Anopheles stephensi. The polypeptide is Pesticidal crystal-like protein Cry16Aa (cry16Aa) (Paraclostridium bifermentans (Clostridium bifermentans)).